Reading from the N-terminus, the 394-residue chain is Phosphoglycerate kinase (394 aa).

Residues 21 to 23 (DFN), Arg-36, 59 to 62 (HLGR), Arg-118, and Arg-151 each bind substrate. Ser-183 bears the Phosphoserine mark. The ATP site is built by Lys-201 and Gly-292. Thr-299 carries the phosphothreonine modification. Residues Glu-323 and 350–353 (GGDS) contribute to the ATP site.

The protein belongs to the phosphoglycerate kinase family. Monomer.

The protein localises to the cytoplasm. The catalysed reaction is (2R)-3-phosphoglycerate + ATP = (2R)-3-phospho-glyceroyl phosphate + ADP. Its pathway is carbohydrate degradation; glycolysis; pyruvate from D-glyceraldehyde 3-phosphate: step 2/5. The protein is Phosphoglycerate kinase of Anoxybacillus flavithermus (strain DSM 21510 / WK1).